Reading from the N-terminus, the 221-residue chain is Endo-1,4-beta-xylanase 2 (221 aa).

Positions 1 to 19 are cleaved as a signal peptide; it reads MVAFTSLLAGFAAIAGVLS. Positions 32–221 constitute a GH11 domain; the sequence is QTIGPGTGYS…SSGSASITVS (190 aa). Residues asparagine 69 and asparagine 92 are each glycosylated (N-linked (GlcNAc...) asparagine). The active-site Nucleophile is glutamate 117. The Proton donor role is filled by glutamate 208.

It belongs to the glycosyl hydrolase 11 (cellulase G) family.

The protein resides in the secreted. It carries out the reaction Endohydrolysis of (1-&gt;4)-beta-D-xylosidic linkages in xylans.. It functions in the pathway glycan degradation; xylan degradation. In terms of biological role, endo-1,4-beta-xylanase involved in the hydrolysis of xylan, a major structural heterogeneous polysaccharide found in plant biomass representing the second most abundant polysaccharide in the biosphere, after cellulose. This chain is Endo-1,4-beta-xylanase 2 (Xyn2), found in Trichoderma harzianum (Hypocrea lixii).